The chain runs to 109 residues: uncharacterized protein (109 aa).

The protein to A.calcoaceticus putative ferredoxin.

This is an uncharacterized protein from Escherichia coli O157:H7.